A 90-amino-acid polypeptide reads, in one-letter code: DNA-directed RNA polymerase subunit omega (90 aa).

A disordered region spans residues glutamine 70 to arginine 90.

The protein belongs to the RNA polymerase subunit omega family. In terms of assembly, the RNAP catalytic core consists of 2 alpha, 1 beta, 1 beta' and 1 omega subunit. When a sigma factor is associated with the core the holoenzyme is formed, which can initiate transcription.

It carries out the reaction RNA(n) + a ribonucleoside 5'-triphosphate = RNA(n+1) + diphosphate. Functionally, promotes RNA polymerase assembly. Latches the N- and C-terminal regions of the beta' subunit thereby facilitating its interaction with the beta and alpha subunits. This is DNA-directed RNA polymerase subunit omega from Vibrio cholerae serotype O1 (strain ATCC 39541 / Classical Ogawa 395 / O395).